Here is a 442-residue protein sequence, read N- to C-terminus: 3-oxoacyl-[acyl-carrier-protein] synthase homolog (442 aa).

The 437-residue stretch at 2-438 (SRRVVITGLG…GVNTSLLFKK (437 aa)) folds into the Ketosynthase family 3 (KS3) domain. Catalysis depends on for beta-ketoacyl synthase activity residues Cys187, His322, and His362.

This sequence belongs to the thiolase-like superfamily. Beta-ketoacyl-ACP synthases family.

The protein localises to the mitochondrion. It catalyses the reaction a fatty acyl-[ACP] + malonyl-[ACP] + H(+) = a 3-oxoacyl-[ACP] + holo-[ACP] + CO2. In terms of biological role, possibly involved in the synthesis of a specialized molecule, probably related to a fatty acid, which is essential for mitochondrial respiration. Is essential for oxygen uptake and the presence of cytochromes A and B. This chain is 3-oxoacyl-[acyl-carrier-protein] synthase homolog (CEM1), found in Saccharomyces cerevisiae (strain ATCC 204508 / S288c) (Baker's yeast).